The sequence spans 360 residues: sn-glycerol-3-phosphate import ATP-binding protein UgpC (360 aa).

The 232-residue stretch at Leu-4–Ile-235 folds into the ABC transporter domain. Residue Gly-37–Ser-44 coordinates ATP.

Belongs to the ABC transporter superfamily. sn-glycerol-3-phosphate importer (TC 3.A.1.1.3) family. In terms of assembly, the complex is composed of two ATP-binding proteins (UgpC), two transmembrane proteins (UgpA and UgpE) and a solute-binding protein (UgpB).

The protein localises to the cell inner membrane. It carries out the reaction sn-glycerol 3-phosphate(out) + ATP + H2O = sn-glycerol 3-phosphate(in) + ADP + phosphate + H(+). Its function is as follows. Part of the ABC transporter complex UgpBAEC involved in sn-glycerol-3-phosphate (G3P) import. Responsible for energy coupling to the transport system. The polypeptide is sn-glycerol-3-phosphate import ATP-binding protein UgpC (Burkholderia mallei (strain ATCC 23344)).